The following is a 43-amino-acid chain: Plasma membrane ATPase proteolipid 2 (43 aa).

The propeptide occupies 1 to 5; sequence MLMST. The helical transmembrane segment at 9–29 threads the bilayer; it reads GVILVFILVGLACIAIISTII. Residues 30 to 43 lie on the Cytoplasmic side of the membrane; it reads YRKWQARQRGLQRF.

As to quaternary structure, monomer and homodimer. Associated with the 100 kDa subunit of the plasma membrane H(+)-ATPase.

It is found in the cell membrane. The sequence is that of Plasma membrane ATPase proteolipid 2 (PMP2) from Saccharomyces cerevisiae (strain ATCC 204508 / S288c) (Baker's yeast).